The following is a 186-amino-acid chain: Putative 5'(3')-deoxyribonucleotidase (186 aa).

Catalysis depends on aspartate 6, which acts as the Nucleophile. Aspartate 6, aspartate 8, and aspartate 137 together coordinate Mg(2+). The active-site Proton donor is the aspartate 8.

Belongs to the 5'(3')-deoxyribonucleotidase family. The cofactor is Mg(2+).

Functionally, dephosphorylates the 5' and 2'(3')-phosphates of deoxyribonucleotides. This is Putative 5'(3')-deoxyribonucleotidase from Bordetella bronchiseptica (strain ATCC BAA-588 / NCTC 13252 / RB50) (Alcaligenes bronchisepticus).